Reading from the N-terminus, the 515-residue chain is Vacuolar fusion protein CCZ1 homolog A (515 aa).

The protein belongs to the CCZ1 family. In terms of assembly, interacts with MON1.

Its subcellular location is the endosome. The protein resides in the prevacuolar compartment. Plays an important role in membrane trafficking through the secretory apparatus. In complex with MON1, acts as a guanine exchange factor (GEF) for RABG3F of the Rab7 protein family. Promotes the exchange of GDP to GTP, converting RABG3F from an inactive GDP-bound form into an active GTP-bound form. The RABG3F active form is involved in protein trafficking from prevacuolar compartments (PVCs) to vacuoles. May serve as a linker between Rab5 and Rab7 protein families in PVCs and mediate PVC maturation. The sequence is that of Vacuolar fusion protein CCZ1 homolog A from Arabidopsis thaliana (Mouse-ear cress).